The primary structure comprises 727 residues: ABC transporter G family member STR2 (727 aa).

Residues 1 to 475 (MKTQGLELET…NFTNIRRTPE (475 aa)) are Cytoplasmic-facing. An ABC transporter domain is found at 25–275 (LEFESLTYTV…LNRMGRKIPK (251 aa)). 69 to 76 (GPSGAGKS) contributes to the ATP binding site. Residues 476 to 496 (LFLSRLMVLTFMGVMMATMFH) traverse the membrane as a helical segment. Topologically, residues 497-510 (NPKNTLQGITNRLS) are extracellular. The chain crosses the membrane as a helical span at residues 511–531 (FFIFTVCLFFFSSNDAVPAFI). Over 532–559 (QERFIFIRETSHNAYRASCYTIASLITH) the chain is Cytoplasmic. Residues 560–580 (MPFLALQALAYAAIVWFALEL) form a helical membrane-spanning segment. Residues 581-583 (RGP) lie on the Extracellular side of the membrane. A helical membrane pass occupies residues 584-604 (FIYFFLVLFISLLSTNSFVVF). Over 605–612 (VSSIVPNY) the chain is Cytoplasmic. A helical membrane pass occupies residues 613–633 (ILGYAAVIAFTALFFLFCGYF). Over 634–699 (LSSEDIPLYW…GTEEIKKRNN (66 aa)) the chain is Extracellular. N-linked (GlcNAc...) asparagine glycosylation occurs at Asn667. The chain crosses the membrane as a helical span at residues 700–720 (VLIMLGWAVLYRILFYIILRF). Residues 721–727 (ASKNQRS) lie on the Cytoplasmic side of the membrane.

Belongs to the ABC transporter superfamily. ABCG family. Stunted arbuscule (STR) subfamily. Heterodimerizes with STR; the resulting transporter is located in the peri-arbuscular membrane. In terms of tissue distribution, expressed constitutively in the vascular tissue of roots.

The protein resides in the cell membrane. Its function is as follows. Together with STR, required for arbuscule development in arbuscular mycorrhizal symbiosis. This is ABC transporter G family member STR2 from Medicago truncatula (Barrel medic).